The sequence spans 127 residues: Large ribosomal subunit protein bL17 (127 aa).

This sequence belongs to the bacterial ribosomal protein bL17 family. In terms of assembly, part of the 50S ribosomal subunit. Contacts protein L32.

This Enterococcus faecalis (strain ATCC 700802 / V583) protein is Large ribosomal subunit protein bL17.